Here is a 186-residue protein sequence, read N- to C-terminus: MSVADIRKGAEQKMQRSIDAFKNDLSKIRTGRAHTGLLDHIQCDYYGSPVPISQVANLTLIDARTIGVQPWEKKMVPVVEKAIRESDLGLNPATQGDVIRVPMPALTEERRRELTKVVKSEAETAKVAVRNLRRDANEQLKKLVKDKEISEDDERRAGDDVQKLTDRFVAEIDKLVVTKEAEIMTV.

The protein belongs to the RRF family.

The protein resides in the cytoplasm. Its function is as follows. Responsible for the release of ribosomes from messenger RNA at the termination of protein biosynthesis. May increase the efficiency of translation by recycling ribosomes from one round of translation to another. In Paraburkholderia xenovorans (strain LB400), this protein is Ribosome-recycling factor.